The following is a 159-amino-acid chain: uncharacterized protein (159 aa).

The first 20 residues, 1 to 20, serve as a signal peptide directing secretion; the sequence is MKKIIAMSLLMFSVVMSVNA.

This is an uncharacterized protein from Pasteurella multocida (strain Pm70).